The following is a 64-amino-acid chain: Beta-defensin 1 (64 aa).

An N-terminal signal peptide occupies residues 1-22; that stretch reads MRLHHLLLVLFFVVLSAGSGFT. 3 cysteine pairs are disulfide-bonded: C31–C60, C38–C53, and C43–C61.

The protein belongs to the beta-defensin family. In terms of assembly, monomer. Homodimer.

The protein resides in the secreted. The protein localises to the membrane. Its function is as follows. Has bactericidal activity. May act as a ligand for C-C chemokine receptor CCR6. Positively regulates the sperm motility and bactericidal activity in a CCR6-dependent manner. Binds to CCR6 and triggers Ca2+ mobilization in the sperm which is important for its motility. This chain is Beta-defensin 1 (DEFB1), found in Ovis aries (Sheep).